Here is a 333-residue protein sequence, read N- to C-terminus: Alpha-N-acetylgalactosaminide alpha-2,6-sialyltransferase 6 (333 aa).

Residues 1–12 are compositionally biased toward polar residues; the sequence is MACSRPPSQCDP. The tract at residues 1 to 27 is disordered; sequence MACSRPPSQCDPTTLPPGPPAGRWPLP. At 1–43 the chain is on the cytoplasmic side; that stretch reads MACSRPPSQCDPTTLPPGPPAGRWPLPFSRRRREMSSNKEQRS. A helical; Signal-anchor for type II membrane protein transmembrane segment spans residues 44 to 64; the sequence is AVFVILFALITILILYSSNSA. Residues 65–333 lie on the Lumenal side of the membrane; it reads NEVFHYGSLR…GITFSHPSWT (269 aa). Asn-98 carries an N-linked (GlcNAc...) asparagine glycan. Residues Cys-108 and Cys-256 are joined by a disulfide bond.

The protein belongs to the glycosyltransferase 29 family. In terms of tissue distribution, widely expressed, the gene expression is most abundant in colon, brain, liver, and heart.

Its subcellular location is the golgi apparatus membrane. It carries out the reaction a ganglioside GM1b (d18:1(4E)) + CMP-N-acetyl-beta-neuraminate = a ganglioside GD1alpha (d18:1(4E)) + CMP + H(+). The catalysed reaction is a ganglioside GD1a (d18:1(4E)) + CMP-N-acetyl-beta-neuraminate = a ganglioside GT1aalpha (d18:1(4E)) + CMP + H(+). The enzyme catalyses a ganglioside GT1b (d18:1(4E)) + CMP-N-acetyl-beta-neuraminate = a ganglioside GQ1balpha (d18:1(4E)) + CMP + H(+). It catalyses the reaction N-acetyl-alpha-neuraminosyl-(2-&gt;3)-beta-D-galactosyl-(1-&gt;3)-N-acetyl-beta-D-glucosaminyl-(1-&gt;3)-beta-D-galactosyl-(1-&gt;4)-beta-D-glucosyl-(1&lt;-&gt;1')-N-acyl-sphing-4-enine + CMP-N-acetyl-beta-neuraminate = N-acetyl-alpha-neuraminosyl-(2-&gt;3)-beta-D-galactosyl-(1-&gt;3)-[N-acetyl-alpha-neuraminosyl-(2-&gt;6)]-N-acetyl-beta-D-glucosaminyl-(1-&gt;3)-beta-D-galactosyl-(1-&gt;4)-beta-D-glucosyl-(1&lt;-&gt;1')-N-acyl-sphing-4-enine + CMP + H(+). It carries out the reaction a globoside MSGG + CMP-N-acetyl-beta-neuraminate = a globoside DSGG + CMP + H(+). The catalysed reaction is 3-O-[alpha-Neu5Ac-(2-&gt;3)-beta-D-Gal-(1-&gt;3)-alpha-D-GalNAc]-L-Ser-[protein] + CMP-N-acetyl-beta-neuraminate = a 3-O-{alpha-Neu5Ac-(2-&gt;3)-beta-D-Gal-(1-&gt;3)-[alpha-Neu5Ac-(2-&gt;6)]-alpha-D-GalNAc}-L-seryl-[protein] + CMP + H(+). The enzyme catalyses 3-O-[alpha-Neu5Ac-(2-&gt;3)-beta-D-Gal-(1-&gt;3)-alpha-D-GalNAc]-L-Thr-[protein] + CMP-N-acetyl-beta-neuraminate = a 3-O-{alpha-Neu5Ac-(2-&gt;3)-beta-D-Gal-(1-&gt;3)-[alpha-Neu5Ac-(2-&gt;6)]-alpha-D-GalNAc}-L-threonyl-[protein] + CMP + H(+). Its function is as follows. Transfers the sialyl group (N-acetyl-alpha-neuraminyl or NeuAc) from CMP-NeuAc onto glycolipids, forming an alpha-2,6-linkage. Produces branched type disialyl structures by transfer of a sialyl group onto the GalNAc or GlcNAc residue inside backbone core chains having a terminal sialic acid with an alpha-2,3-linkage on Gal. ST6GalNAcVI prefers glycolipids to glycoproteins, predominantly catalyzing the biosynthesis of ganglioside GD1alpha from GM1b. Also has activity toward GD1a and GT1b, and can generate DSGG (disialylgalactosylgloboside) from MSGG (monosialylgalactosylgloboside). Besides GMb1, MSGG and other glycolipids, it shows activity towards sialyl Lc4Cer generating disialyl Lc4Cer, which can lead to the synthesis of disialyl Lewis a (Le(a)), suggested to be a cancer-associated antigen. The chain is Alpha-N-acetylgalactosaminide alpha-2,6-sialyltransferase 6 (St6galnac6) from Mus musculus (Mouse).